Here is a 66-residue protein sequence, read N- to C-terminus: Large ribosomal subunit protein bL33c (66 aa).

It belongs to the bacterial ribosomal protein bL33 family.

Its subcellular location is the plastid. It localises to the chloroplast. The protein is Large ribosomal subunit protein bL33c of Carica papaya (Papaya).